Reading from the N-terminus, the 287-residue chain is MADKVRLGLIQLCGCSGCHISLLDLHEQLLDVLPNLEIVYAPIIADVKEIPECDVFLIEGGARNEHDEHLIHEIREKSKVVIAWGTCAVYGGIPGLGNLYSAEQLKKTVYGTETTDNVGELPSDEMVPPLTNSVMPVPSIVDVEYVIPGCPPRPEINAGAIVALLEGRDPELPKKIVCDECPRTKENVIPETFKRTFEGTPDPEKCLFEQGYTCVGMGTRAGCGALCPSAGVPCRGCYGKTDEVLDQGSSLANTYAAAGDEALKISDKSALFNRFTLPAALISKKQE.

The protein belongs to the [NiFe]/[NiFeSe] hydrogenase small subunit family. As to quaternary structure, the F420-non-reducing hydrogenase vhu is composed of four subunits; VhuA, VhuD, VhuG and VhuU.

This Methanococcus voltae protein is F420-non-reducing hydrogenase vhu subunit G (vhuG).